Here is a 322-residue protein sequence, read N- to C-terminus: Probable heme-iron transport system permease protein IsdF (322 aa).

The next 9 membrane-spanning stretches (helical) occupy residues 9-29 (LLFLCLLVILIATAYISFVTG), 61-81 (ILIALMVGAMLAVSGALLQAA), 89-109 (ANIIGVSSGALIMRALCMLFI), 114-134 (FYLPLLSFIGGLIPFLIIILL), 143-163 (VSMILVGVALFVLLNGVLEIL), 179-199 (IWSDVYILAVSALLGLILTLL), 233-253 (VFLASATVAIVGQLAFLGIIV), 267-287 (VLIPFSTVIGAWLLLVADLLG), and 294-314 (LEIPANAILMIVGGPMLIYLI).

It belongs to the binding-protein-dependent transport system permease family. FecCD subfamily.

The protein resides in the cell membrane. Part of the binding-protein-dependent transport system for heme-iron. Responsible for the translocation of the substrate across the membrane. The sequence is that of Probable heme-iron transport system permease protein IsdF (isdF) from Staphylococcus aureus (strain Mu3 / ATCC 700698).